The chain runs to 287 residues: Nucleotide-binding protein Hhal_2130 (287 aa).

11-18 (GLSGSGKS) is an ATP binding site. 63 to 66 (DARN) is a binding site for GTP.

It belongs to the RapZ-like family.

In terms of biological role, displays ATPase and GTPase activities. This Halorhodospira halophila (strain DSM 244 / SL1) (Ectothiorhodospira halophila (strain DSM 244 / SL1)) protein is Nucleotide-binding protein Hhal_2130.